We begin with the raw amino-acid sequence, 294 residues long: 1D-myo-inositol 2-acetamido-2-deoxy-alpha-D-glucopyranoside deacetylase (294 aa).

Zn(2+)-binding residues include histidine 15, aspartate 18, and histidine 150.

This sequence belongs to the MshB deacetylase family. Zn(2+) serves as cofactor.

The catalysed reaction is 1D-myo-inositol 2-acetamido-2-deoxy-alpha-D-glucopyranoside + H2O = 1D-myo-inositol 2-amino-2-deoxy-alpha-D-glucopyranoside + acetate. Its function is as follows. Catalyzes the deacetylation of 1D-myo-inositol 2-acetamido-2-deoxy-alpha-D-glucopyranoside (GlcNAc-Ins) in the mycothiol biosynthesis pathway. The protein is 1D-myo-inositol 2-acetamido-2-deoxy-alpha-D-glucopyranoside deacetylase of Streptomyces avermitilis (strain ATCC 31267 / DSM 46492 / JCM 5070 / NBRC 14893 / NCIMB 12804 / NRRL 8165 / MA-4680).